Consider the following 108-residue polypeptide: ATP-dependent Clp protease adapter protein ClpS (108 aa).

This sequence belongs to the ClpS family. Binds to the N-terminal domain of the chaperone ClpA.

Its function is as follows. Involved in the modulation of the specificity of the ClpAP-mediated ATP-dependent protein degradation. This Ralstonia nicotianae (strain ATCC BAA-1114 / GMI1000) (Ralstonia solanacearum) protein is ATP-dependent Clp protease adapter protein ClpS.